The following is a 450-amino-acid chain: V-type proton ATPase subunit H (450 aa).

This sequence belongs to the V-ATPase H subunit family. V-ATPase is a heteromultimeric enzyme composed of a peripheral catalytic V1 complex (components A to H) attached to an integral membrane V0 proton pore complex (components: a, c, c', c'', d, e, f and VOA1).

The protein localises to the vacuole membrane. Its function is as follows. Subunit of the V1 complex of vacuolar(H+)-ATPase (V-ATPase), a multisubunit enzyme composed of a peripheral complex (V1) that hydrolyzes ATP and a membrane integral complex (V0) that translocates protons. V-ATPase is responsible for acidifying and maintaining the pH of intracellular compartments. This subunit is essential for activity, but not assembly, of the enzyme complex. This subunit is also required for silencing the ATPase activity of V-ATPase when V1 is detached from V0. This Schizosaccharomyces pombe (strain 972 / ATCC 24843) (Fission yeast) protein is V-type proton ATPase subunit H (vma13).